The primary structure comprises 370 residues: UDP-N-acetylglucosamine--N-acetylmuramyl-(pentapeptide) pyrophosphoryl-undecaprenol N-acetylglucosamine transferase (370 aa).

UDP-N-acetyl-alpha-D-glucosamine-binding positions include 10–12 (TGG), N126, S200, I255, and Q300.

Belongs to the glycosyltransferase 28 family. MurG subfamily.

It localises to the cell membrane. It carries out the reaction Mur2Ac(oyl-L-Ala-gamma-D-Glu-L-Lys-D-Ala-D-Ala)-di-trans,octa-cis-undecaprenyl diphosphate + UDP-N-acetyl-alpha-D-glucosamine = beta-D-GlcNAc-(1-&gt;4)-Mur2Ac(oyl-L-Ala-gamma-D-Glu-L-Lys-D-Ala-D-Ala)-di-trans,octa-cis-undecaprenyl diphosphate + UDP + H(+). It functions in the pathway cell wall biogenesis; peptidoglycan biosynthesis. Its function is as follows. Cell wall formation. Catalyzes the transfer of a GlcNAc subunit on undecaprenyl-pyrophosphoryl-MurNAc-pentapeptide (lipid intermediate I) to form undecaprenyl-pyrophosphoryl-MurNAc-(pentapeptide)GlcNAc (lipid intermediate II). The polypeptide is UDP-N-acetylglucosamine--N-acetylmuramyl-(pentapeptide) pyrophosphoryl-undecaprenol N-acetylglucosamine transferase (Lactobacillus johnsonii (strain CNCM I-12250 / La1 / NCC 533)).